Reading from the N-terminus, the 541-residue chain is MHRRNLLKASMAIAAYTGLSASGLLAAQAWAGNRAADGKAVAFDFESLKAQAKQLAGTAYKDTRQVLPPTLATMTPQNFNAIGYDGNHSLWKELNGQLDVQFFHVGMGFKTPVRMHSVDPKTREAREVHFRPSLFNYEKTTVDTKQLTGDLGFSGFKLFKAPELDRHDVLSFLGASYFRAVDSTGQYGLSARGLAIDTYAKKREEFPDFTQFWFETPDKNATRFVVYALLDSPSATGAYRFDIDCQANQVVMAIDAHINARTTIEQLGIAPMTSMFSCGTHERRMCDTIHPQIHDSDRLAMWRGNGEWICRPLNNPAKLQFNAFADTDPKGFGLVQTDHEFASYQDTVDWYSKRPSLWVEPTTAWGEGSIDLLEIPTTGETLDNIVAFWTPKKPVAAGDSLNYGYKLYWSALPPVSTPLAQVDATRSGMGGFTEGWAPGEHYPEVWARRFAVDFKGGGLDRLPAGTGIEPVVTCSHGEVKDFSVLVLDNIKGYRILFDWYPTSDSVEPVELRLFIRTQDRTLSETWLYQYFPPAPEARKYT.

Positions 1 to 29 (MHRRNLLKASMAIAAYTGLSASGLLAAQA) form a signal peptide, tat-type signal.

This sequence belongs to the OpgD/OpgG family. Post-translationally, predicted to be exported by the Tat system. The position of the signal peptide cleavage has not been experimentally proven.

The protein localises to the periplasm. It functions in the pathway glycan metabolism; osmoregulated periplasmic glucan (OPG) biosynthesis. Functionally, probably involved in the control of the structural glucose backbone of osmoregulated periplasmic glucans (OPGs). This is Glucans biosynthesis protein D from Pseudomonas fluorescens (strain SBW25).